A 531-amino-acid chain; its full sequence is Bifunctional aspartate aminotransferase and L-aspartate beta-decarboxylase (531 aa).

L-aspartate contacts are provided by glycine 114 and asparagine 255. Lysine 314 carries the post-translational modification N6-(pyridoxal phosphate)lysine. Residue arginine 496 coordinates L-aspartate.

The protein belongs to the class-I pyridoxal-phosphate-dependent aminotransferase family. As to quaternary structure, homododecamer. The cofactor is pyridoxal 5'-phosphate.

It carries out the reaction L-aspartate + H(+) = L-alanine + CO2. The catalysed reaction is L-aspartate + 2-oxoglutarate = oxaloacetate + L-glutamate. Inhibited by 10 mM Co(2+), Mn(2+) and Ni(2+), and by 1 mM Cu(2+) and Hg(2+). In terms of biological role, bifunctional enzyme that has both L-aspartate decarboxylase and transaminase activity. Has high activity with L-aspartate, and much lower activity with D-aspartate, L-lysine and L-glutamine. The chain is Bifunctional aspartate aminotransferase and L-aspartate beta-decarboxylase from Pseudomonas sp.